A 432-amino-acid polypeptide reads, in one-letter code: Pachytene checkpoint protein 2 homolog (432 aa).

Met1 bears the N-acetylmethionine mark. Position 179-186 (179-186) interacts with ATP; sequence GPPGTGKT.

This sequence belongs to the AAA ATPase family. PCH2 subfamily. As to quaternary structure, specifically interacts with the ligand binding domain of the thyroid receptor (TR). This interaction does not require the presence of thyroid hormone for its interaction. Interacts with proteasome subunit PSMA8; to participate in meiosis progression during spermatogenesis.

In terms of biological role, plays a key role in chromosome recombination and chromosome structure development during meiosis. Required at early steps in meiotic recombination that leads to non-crossovers pathways. Also needed for efficient completion of homologous synapsis by influencing crossover distribution along the chromosomes affecting both crossovers and non-crossovers pathways. Also required for development of higher-order chromosome structures and is needed for synaptonemal-complex formation. In males, required for efficient synapsis of the sex chromosomes and for sex body formation. Promotes early steps of the DNA double-strand breaks (DSBs) repair process upstream of the assembly of RAD51 complexes. Required for depletion of HORMAD1 and HORMAD2 from synapsed chromosomes. Plays a role in mitotic spindle assembly checkpoint (SAC) activation. The chain is Pachytene checkpoint protein 2 homolog (Trip13) from Rattus norvegicus (Rat).